The chain runs to 355 residues: tRNA (guanine-N(1)-)-methyltransferase (355 aa).

Residues Gly109 and 129-134 contribute to the S-adenosyl-L-methionine site; that span reads IGDYVL.

Belongs to the RNA methyltransferase TrmD family. In terms of assembly, homodimer.

Its subcellular location is the cytoplasm. It catalyses the reaction guanosine(37) in tRNA + S-adenosyl-L-methionine = N(1)-methylguanosine(37) in tRNA + S-adenosyl-L-homocysteine + H(+). Functionally, specifically methylates guanosine-37 in various tRNAs. The chain is tRNA (guanine-N(1)-)-methyltransferase from Chlamydia caviae (strain ATCC VR-813 / DSM 19441 / 03DC25 / GPIC) (Chlamydophila caviae).